A 301-amino-acid chain; its full sequence is Mitochondrial carnitine/acylcarnitine carrier protein (301 aa).

Ala2 bears the N-acetylalanine mark. Over 2–12 (ADQPKPISPLK) the chain is Cytoplasmic. 3 Solcar repeats span residues 8 to 99 (ISPL…GKKL), 108 to 196 (LSYP…LKNI), and 207 to 293 (LSAP…AMKF). The chain crosses the membrane as a helical span at residues 13–31 (NLLAGGFGGVCLVFVGHPL). Topologically, residues 32-73 (DTVKVRLQTQPPSLPGQPPMYSGTFDCFRKTLFREGITGLYR) are mitochondrial matrix. The helical transmembrane segment at 74–93 (GMAAPIIGVTPMFAVCFFGF) threads the bilayer. The Cytoplasmic portion of the chain corresponds to 94–112 (GLGKKLQQKHPEDVLSYPQ). A helical transmembrane segment spans residues 113 to 131 (LFAAGMLSGVFTTGIMTPG). The Mitochondrial matrix portion of the chain corresponds to 132 to 170 (ERIKCLLQIQASSGESKYTGTLDCAKKLYQEFGIRGIYK). N6-acetyllysine occurs at positions 148 and 157. At Lys170 the chain carries N6-acetyllysine; alternate. Lys170 is subject to N6-succinyllysine; alternate. A helical transmembrane segment spans residues 171–190 (GTVLTLMRDVPASGMYFMTY). The Cytoplasmic portion of the chain corresponds to 191–211 (EWLKNIFTPEGKRVSELSAPR). The chain crosses the membrane as a helical span at residues 212–230 (ILVAGGIAGIFNWAVAIPP). Residues 231-267 (DVLKSRFQTAPPGKYPNGFRDVLRELIRDEGVTSLYK) lie on the Mitochondrial matrix side of the membrane. The chain crosses the membrane as a helical span at residues 268-287 (GFNAVMIRAFPANAACFLGF). Residues 288–301 (EVAMKFLNWATPNL) are Cytoplasmic-facing.

The protein belongs to the mitochondrial carrier (TC 2.A.29) family.

The protein resides in the mitochondrion inner membrane. It carries out the reaction O-acetyl-(R)-carnitine(in) + (R)-carnitine(out) = O-acetyl-(R)-carnitine(out) + (R)-carnitine(in). The catalysed reaction is an O-acyl-(R)-carnitine(in) + (R)-carnitine(out) = an O-acyl-(R)-carnitine(out) + (R)-carnitine(in). The enzyme catalyses O-propanoyl-(R)-carnitine(in) + (R)-carnitine(out) = O-propanoyl-(R)-carnitine(out) + (R)-carnitine(in). It catalyses the reaction O-hexadecanoyl-(R)-carnitine(in) + (R)-carnitine(out) = O-hexadecanoyl-(R)-carnitine(out) + (R)-carnitine(in). It carries out the reaction O-octanoyl-(R)-carnitine(in) + (R)-carnitine(out) = O-octanoyl-(R)-carnitine(out) + (R)-carnitine(in). The catalysed reaction is (R)-carnitine(in) = (R)-carnitine(out). Its function is as follows. Mediates the electroneutral exchange of acylcarnitines (O-acyl-(R)-carnitine or L-acylcarnitine) of different acyl chain lengths (ranging from O-acetyl-(R)-carnitine to long-chain O-acyl-(R)-carnitines) with free carnitine ((R)-carnitine or L-carnitine) across the mitochondrial inner membrane, via a ping-pong mechanism. Key player in the mitochondrial oxidation pathway, it translocates the fatty acids in the form of acylcarnitines into the mitochondrial matrix, where the carnitine palmitoyltransferase 2 (CPT-2) activates them to undergo fatty acid beta-oxidation. Catalyzes the unidirectional transport (uniport) of carnitine at lower rates than the antiport (exchange). The sequence is that of Mitochondrial carnitine/acylcarnitine carrier protein from Homo sapiens (Human).